A 240-amino-acid chain; its full sequence is 1-(5-phosphoribosyl)-5-[(5-phosphoribosylamino)methylideneamino] imidazole-4-carboxamide isomerase (240 aa).

Aspartate 8 acts as the Proton acceptor in catalysis. Residue aspartate 129 is the Proton donor of the active site.

Belongs to the HisA/HisF family.

It localises to the cytoplasm. The catalysed reaction is 1-(5-phospho-beta-D-ribosyl)-5-[(5-phospho-beta-D-ribosylamino)methylideneamino]imidazole-4-carboxamide = 5-[(5-phospho-1-deoxy-D-ribulos-1-ylimino)methylamino]-1-(5-phospho-beta-D-ribosyl)imidazole-4-carboxamide. It participates in amino-acid biosynthesis; L-histidine biosynthesis; L-histidine from 5-phospho-alpha-D-ribose 1-diphosphate: step 4/9. The chain is 1-(5-phosphoribosyl)-5-[(5-phosphoribosylamino)methylideneamino] imidazole-4-carboxamide isomerase from Caldanaerobacter subterraneus subsp. tengcongensis (strain DSM 15242 / JCM 11007 / NBRC 100824 / MB4) (Thermoanaerobacter tengcongensis).